The following is a 259-amino-acid chain: Ferritin-4, chloroplastic (259 aa).

A chloroplast-targeting transit peptide spans 1 to 57 (MLLKTVSSSSSSALSLVNFHGVKKDVSPLLPSISSNLRVSSGKSGNLTFSFRASKSS). Residues 58–90 (TTDALSGVVFEPFKEVKKELDLVPTSSHLSLAR) form an extension peptide (EP) region. One can recognise a Ferritin-like diiron domain in the interval 91–244 (QKYSDECEAA…EYVAQLRRVG (154 aa)). The Fe cation site is built by glutamate 108, glutamate 143, histidine 146, glutamate 192, and glutamine 226.

The protein belongs to the ferritin family. As to quaternary structure, oligomer of 24 subunits. There are two types of subunits: L (light) chain and H (heavy) chain. The major chain can be light or heavy, depending on the species and tissue type. The functional molecule forms a roughly spherical shell with a diameter of 12 nm and contains a central cavity into which the insoluble mineral iron core is deposited.

Its subcellular location is the plastid. It localises to the chloroplast. It carries out the reaction 4 Fe(2+) + O2 + 4 H(+) = 4 Fe(3+) + 2 H2O. Stores iron in a soluble, non-toxic, readily available form. Important for iron homeostasis. Has ferroxidase activity. Iron is taken up in the ferrous form and deposited as ferric hydroxides after oxidation. The sequence is that of Ferritin-4, chloroplastic (FER4) from Arabidopsis thaliana (Mouse-ear cress).